The chain runs to 20 residues: Kassinatuerin-2 (20 aa).

Isoleucine 20 carries the isoleucine amide modification.

In terms of tissue distribution, expressed by the skin dorsal glands.

The protein localises to the secreted. In terms of biological role, has no antimicrobial activities against bacteria (E.coli and S.aureus) nor against the fungus C.albicans. In Kassina senegalensis (Senegal running frog), this protein is Kassinatuerin-2.